A 344-amino-acid polypeptide reads, in one-letter code: Glycerol-3-phosphate dehydrogenase [NAD(P)+] 2 (344 aa).

NADPH contacts are provided by serine 12, tryptophan 13, arginine 33, arginine 34, and lysine 107. Residues lysine 107, glycine 138, and serine 140 each coordinate sn-glycerol 3-phosphate. Residue alanine 142 coordinates NADPH. The sn-glycerol 3-phosphate site is built by lysine 193, aspartate 246, serine 256, arginine 257, and asparagine 258. Lysine 193 (proton acceptor) is an active-site residue. Position 257 (arginine 257) interacts with NADPH. Valine 281 and glutamate 283 together coordinate NADPH.

It belongs to the NAD-dependent glycerol-3-phosphate dehydrogenase family.

It localises to the cytoplasm. It catalyses the reaction sn-glycerol 3-phosphate + NAD(+) = dihydroxyacetone phosphate + NADH + H(+). The enzyme catalyses sn-glycerol 3-phosphate + NADP(+) = dihydroxyacetone phosphate + NADPH + H(+). The protein operates within membrane lipid metabolism; glycerophospholipid metabolism. Functionally, catalyzes the reduction of the glycolytic intermediate dihydroxyacetone phosphate (DHAP) to sn-glycerol 3-phosphate (G3P), the key precursor for phospholipid synthesis. The sequence is that of Glycerol-3-phosphate dehydrogenase [NAD(P)+] 2 from Salinibacter ruber (strain DSM 13855 / M31).